A 158-amino-acid chain; its full sequence is Probable cyclic pyranopterin monophosphate synthase (158 aa).

Residues M78–H80 and M114–E115 contribute to the substrate site. D129 is an active-site residue.

It belongs to the MoaC family. As to quaternary structure, homohexamer; trimer of dimers.

The enzyme catalyses (8S)-3',8-cyclo-7,8-dihydroguanosine 5'-triphosphate = cyclic pyranopterin phosphate + diphosphate. The protein operates within cofactor biosynthesis; molybdopterin biosynthesis. Its function is as follows. Catalyzes the conversion of (8S)-3',8-cyclo-7,8-dihydroguanosine 5'-triphosphate to cyclic pyranopterin monophosphate (cPMP). In Methanosarcina acetivorans (strain ATCC 35395 / DSM 2834 / JCM 12185 / C2A), this protein is Probable cyclic pyranopterin monophosphate synthase.